The following is a 567-amino-acid chain: NADH-ubiquinone oxidoreductase chain 2 (567 aa).

Transmembrane regions (helical) follow at residues 2–22 (LILSLFILIIYSSIINNIDTI), 43–63 (IGIIIILYSLYIFKDISLSYI), 85–105 (NIFNIYIIFLLLIVIISLLSI), 133–153 (LNIYYISIIIFNIIGLILLLT), 158–178 (ISIFISIELQSYSLYILTGII), 189–209 (LFYYLIGGIGSIIILYGISLL), 236–256 (ILIGWLFIIIGLLIKIGAAPM), 274–294 (YISLIPKISILSYILLIILNL), 312–332 (LIYILSIIIILSLIIGSIGGL), 340–360 (ILAYSGLLNIGYFLLIILSLI), 372–392 (IIYITQYCFNHISIFILLIIA), 423–443 (LIFCLIIIIGSFIGIPPLFGF), 459–479 (LFLSLLLIISSIISSIYYLYF), and 530–550 (VGNYITYILSSYILIILFNFI).

It belongs to the complex I subunit 2 family.

It is found in the mitochondrion inner membrane. The catalysed reaction is a ubiquinone + NADH + 5 H(+)(in) = a ubiquinol + NAD(+) + 4 H(+)(out). Functionally, core subunit of the mitochondrial membrane respiratory chain NADH dehydrogenase (Complex I) that is believed to belong to the minimal assembly required for catalysis. Complex I functions in the transfer of electrons from NADH to the respiratory chain. The immediate electron acceptor for the enzyme is believed to be ubiquinone. The sequence is that of NADH-ubiquinone oxidoreductase chain 2 (ND2) from Wickerhamomyces canadensis (Yeast).